Reading from the N-terminus, the 421-residue chain is UDP-N-acetylglucosamine 1-carboxyvinyltransferase (421 aa).

Phosphoenolpyruvate is bound at residue 22–23 (KN). Arg-93 contributes to the UDP-N-acetyl-alpha-D-glucosamine binding site. Cys-117 functions as the Proton donor in the catalytic mechanism. Residue Cys-117 is modified to 2-(S-cysteinyl)pyruvic acid O-phosphothioketal. Residues 122–126 (RPVDQ), Asp-309, and Ile-331 each bind UDP-N-acetyl-alpha-D-glucosamine.

Belongs to the EPSP synthase family. MurA subfamily.

It localises to the cytoplasm. It carries out the reaction phosphoenolpyruvate + UDP-N-acetyl-alpha-D-glucosamine = UDP-N-acetyl-3-O-(1-carboxyvinyl)-alpha-D-glucosamine + phosphate. The protein operates within cell wall biogenesis; peptidoglycan biosynthesis. In terms of biological role, cell wall formation. Adds enolpyruvyl to UDP-N-acetylglucosamine. This chain is UDP-N-acetylglucosamine 1-carboxyvinyltransferase, found in Albidiferax ferrireducens (strain ATCC BAA-621 / DSM 15236 / T118) (Rhodoferax ferrireducens).